Reading from the N-terminus, the 139-residue chain is Coat protein TP2 (139 aa).

The protein resides in the virion. The protein is Coat protein TP2 of Thermoproteus tenax virus 1 (strain KRA1) (TTV1).